The following is a 190-amino-acid chain: Isopentenyl-diphosphate Delta-isomerase (190 aa).

Mn(2+)-binding residues include histidine 27 and histidine 34. The Nudix hydrolase domain occupies 32–171 (PLHFAFSSYI…PFVFSPWMVD (140 aa)). Cysteine 69 is a catalytic residue. Mg(2+) is bound at residue cysteine 69. Histidine 71 is a Mn(2+) binding site. Glutamate 89 is a Mg(2+) binding site. 2 residues coordinate Mn(2+): glutamate 119 and glutamate 121. Glutamate 121 is an active-site residue.

This sequence belongs to the IPP isomerase type 1 family. Mg(2+) is required as a cofactor. Mn(2+) serves as cofactor.

Its subcellular location is the cytoplasm. The catalysed reaction is isopentenyl diphosphate = dimethylallyl diphosphate. It participates in isoprenoid biosynthesis; dimethylallyl diphosphate biosynthesis; dimethylallyl diphosphate from isopentenyl diphosphate: step 1/1. Catalyzes the 1,3-allylic rearrangement of the homoallylic substrate isopentenyl (IPP) to its highly electrophilic allylic isomer, dimethylallyl diphosphate (DMAPP). This chain is Isopentenyl-diphosphate Delta-isomerase, found in Corynebacterium efficiens (strain DSM 44549 / YS-314 / AJ 12310 / JCM 11189 / NBRC 100395).